A 2554-amino-acid polypeptide reads, in one-letter code: Highly reducing polyketide synthase PKS6 (2554 aa).

Residues 1-48 form a disordered region; the sequence is MGSLSAVPATNGNHAALNGSASTNGQHVNGSTHVNGNHSLNGSAQVNG. A compositionally biased stretch (polar residues) spans 8 to 48; it reads PATNGNHAALNGSASTNGQHVNGSTHVNGNHSLNGSAQVNG. The region spanning 56–481 is the Ketosynthase family 3 (KS3) domain; it reads LEPIAVVGMS…GTNAHVVVDA (426 aa). Residues cysteine 230, histidine 367, and histidine 407 each act as for beta-ketoacyl synthase activity in the active site. Positions 595–913 are malonyl-CoA:ACP transacylase (MAT) domain; the sequence is VFSGQGAQYP…HYTGSLKRGE (319 aa). The segment at 981 to 1119 is N-terminal hotdog fold; sequence HELLGTLVHD…GLVQVILKSE (139 aa). The tract at residues 981–1281 is dehydratase (DH) domain; sequence HELLGTLVHD…QAWGVVATKL (301 aa). The PKS/mFAS DH domain occupies 981-1287; it reads HELLGTLVHD…ATKLPDVSIG (307 aa). Histidine 1013 acts as the Proton acceptor; for dehydratase activity in catalysis. The segment at 1137–1287 is C-terminal hotdog fold; sequence AQHIPANQFY…ATKLPDVSIG (151 aa). Aspartate 1200 functions as the Proton donor; for dehydratase activity in the catalytic mechanism. The interval 1451-1556 is methyltransferase (CMet) domain; it reads VEVGAGTGSA…KTMLRPGGKL (106 aa). Positions 1840 to 2153 are enoyl reductase (ER) domain; it reads GVLDTIRWVD…AGKHTGKVIL (314 aa). Residues 2177 to 2353 are ketoreductase (KR) domain; the sequence is ATYLVVGGLG…TAYAVNIGAI (177 aa). In terms of domain architecture, Carrier spans 2457-2534; it reads EAQDIICDAI…ELAEIVTKGS (78 aa). Serine 2494 carries the post-translational modification O-(pantetheine 4'-phosphoryl)serine.

It participates in secondary metabolite biosynthesis. Functionally, highly reducing polyketide synthase; part of the gene cluster that mediates the biosynthesis of the lipopeptide fusaristatin A. Fusaristatin A consists of a polyketide chain linked to three amino acid residues glutamine (Gln), dehydroalanine (dehydro-Ala), and beta-aminoisobutyric acid. The biosynthesis starts with formation of a linear polyketide chain by the highly reducing polyketide synthase PKS6. The gene cluster does not contain an acyl-CoA ligase or an acyl-transferase, and it is therefore predicted that the polyketide is transferred directly to the nonribosomal peptide synthetase NRPS7. Modules 1-3 from NRPS7 incorporate dehydro-Ala, Gln, and beta-aminoisobutyric acid in the compound, which is released by cyclization. The beta-aminoisobutyric acid units are most likely not freely available to the NRPS, but can be synthesized from thymine, which requires a dehydrogenase, a monooxygenase, and an aminotransferase. The fusaristatin A cluster contains a cytochrome P450 monooxygenase (FGSG_08207) and an aminotransferase (FGSG_17085), which theoretically can perform two of the enzymatic steps. The enzymes may however also be involved in biosynthesis of dehydroalanine or modification of the polyketide. The dehydro-Ala residue can be a result of cyclization, where serine is dehydrated. The last gene of the cluster encodes a protein with an A/B barrel domain found in variable enzymes, which hampers functional prediction. The polypeptide is Highly reducing polyketide synthase PKS6 (Gibberella zeae (strain ATCC MYA-4620 / CBS 123657 / FGSC 9075 / NRRL 31084 / PH-1) (Wheat head blight fungus)).